The following is a 155-amino-acid chain: FHA domain-containing protein FhaB (155 aa).

The helical transmembrane segment at 6-28 (LQLTRAGFLMLLWVFIWSVLRIL) threads the bilayer. At Thr-36 the chain carries Phosphothreonine. Residues 83 to 132 (VLIGRADDSTLVLTDDYASTRHARLSMRGSEWYVEDLGSTNGTYLDRAKV) enclose the FHA domain.

Post-translationally, phosphorylated by PknB. Dephosphorylated by PstP.

It localises to the cell membrane. The sequence is that of FHA domain-containing protein FhaB (fhaB) from Mycobacterium tuberculosis (strain CDC 1551 / Oshkosh).